Here is a 305-residue protein sequence, read N- to C-terminus: Probable lipid kinase YegS-like (305 aa).

One can recognise a DAGKc domain in the interval 2–134 (HPPAPALLII…DLAKVNDQRY (133 aa)). ATP-binding positions include Thr-40, 66–72 (GDGTINE), and Thr-95. Positions 215, 218, and 220 each coordinate Mg(2+). The Proton acceptor role is filled by Glu-271.

Belongs to the diacylglycerol/lipid kinase family. YegS lipid kinase subfamily. It depends on Mg(2+) as a cofactor. Ca(2+) is required as a cofactor.

It localises to the cytoplasm. Functionally, probably phosphorylates lipids; the in vivo substrate is unknown. The polypeptide is Probable lipid kinase YegS-like (Serratia proteamaculans (strain 568)).